The chain runs to 924 residues: Phosphatidate phosphatase LPIN1 (924 aa).

An N-LIP region spans residues 1-108 (MNYVGQLAGQ…IPMYLATSPI (108 aa)). Phosphoserine is present on residues serine 106 and serine 150. Disordered stretches follow at residues 133-248 (PTTA…DCQR) and 269-297 (FHASESPSGSRPSTPKSDSELVSKSADRL). Basic residues predominate over residues 152 to 161 (GKKRRKRRRK). A Nuclear localization signal motif is present at residues 153 to 158 (KKRRKR). Residues 162-172 (AQLDNLKRDDN) are compositionally biased toward basic and acidic residues. A compositionally biased stretch (acidic residues) spans 176–193 (SEDEDMFPIEMSSDEDTA). Composition is skewed to polar residues over residues 218–229 (PSISTHPQSASY) and 273–284 (ESPSGSRPSTPK). Phosphoserine is present on residues serine 285, serine 287, and serine 293. Over residues 285-297 (SDSELVSKSADRL) the composition is skewed to basic and acidic residues. Threonine 298 bears the Phosphothreonine mark. 2 disordered regions span residues 314 to 426 (QAAK…SRHL) and 446 to 490 (LYFP…STSD). Serine 328 bears the Phosphoserine mark. The segment covering 343 to 358 (AIHSESSDTFSDQSPT) has biased composition (polar residues). Serine 392 carries the phosphoserine modification. Residues 404–413 (NTAQSSSKTD) are compositionally biased toward polar residues. The residue at position 459 (lysine 459) is an N6-acetyllysine. Over residues 461-476 (ASDNGARSANQSPQSV) the composition is skewed to polar residues. A phosphoserine mark is found at serine 468, serine 472, and serine 483. Glycyl lysine isopeptide (Lys-Gly) (interchain with G-Cter in SUMO) cross-links involve residues lysine 599 and lysine 629. Residues 627 to 649 (RIKHESSSSDEEHAAAKPSGSSH) are disordered. The segment covering 628-641 (IKHESSSSDEEHAA) has biased composition (basic and acidic residues). At lysine 629 the chain carries N6-acetyllysine. Phosphoserine occurs at positions 634 and 635. Residues 658–864 (YKKTLRLTSE…VNPKGELVQE (207 aa)) form a C-LIP region. The short motif at 712-716 (DIDGT) is the DXDXT motif element. Residues 723 to 727 (LGHIL) carry the LXXIL motif motif. 2 positions are modified to phosphoserine: serine 921 and serine 923.

Belongs to the lipin family. As to quaternary structure, interacts (via LXXIL motif) with PPARA. Interacts with PPARGC1A. Interaction with PPARA and PPARGC1A leads to the formation of a complex that modulates gene transcription. Interacts with MEF2C. Mg(2+) is required as a cofactor. Post-translationally, phosphorylated at multiple sites in response to insulin. Phosphorylation is controlled by the mTOR signaling pathway. Phosphorylation is decreased by epinephrine. Phosphorylation may not directly affect the catalytic activity but may regulate the localization. Dephosphorylated by the CTDNEP1-CNEP1R1 complex. Phosphorylated at multiple sites by mTOR in response to insulin, leading to its inactivation. Phosphorylation does not affect the catalytic activity but regulates the localization. Phosphorylation is decreased by epinephrine. Dephosphorylated by the CTDNEP1-CNEP1R1 complex. Dephosphorylation following mTOR inhibition promotes its activity. In terms of processing, sumoylation is important in brain and is marginal in other tissues. Sumoylation facilitates nuclear localization of isoform 2 in neuronals cells and its transcriptional coactivator activity. Post-translationally, acetylation at Lys-459 and Lys-629 by KAT5 in response to fatty acids promotes translocation to the endoplasmic reticulum and synthesis of diacylglycerol. Specifically expressed in skeletal muscle. Also expressed prominently in adipose tissue, and testis. Lower expression also detected in kidney, lung, brain and liver. In terms of tissue distribution, predominant isoform in the liver. As to expression, predominant isoform in the brain.

The protein resides in the mitochondrion outer membrane. It localises to the cytoplasm. The protein localises to the nucleus membrane. Its subcellular location is the nucleus. It is found in the endoplasmic reticulum membrane. The catalysed reaction is a 1,2-diacyl-sn-glycero-3-phosphate + H2O = a 1,2-diacyl-sn-glycerol + phosphate. It carries out the reaction 1-octadecanoyl-2-(4Z,7Z,10Z,13Z,16Z,19Z-docosahexaenoyl)-sn-glycero-3-phosphate + H2O = 1-octadecanoyl-2-(4Z,7Z,10Z,13Z,16Z,19Z-docosahexaenoyl)-sn-glycerol + phosphate. The enzyme catalyses 1-octadecanoyl-2-(5Z,8Z,11Z,14Z-eicosatetraenoyl)-sn-glycero-3-phosphate + H2O = 1-octadecanoyl-2-(5Z,8Z,11Z,14Z-eicosatetraenoyl)-sn-glycerol + phosphate. It catalyses the reaction 1-octadecanoyl-2-(9Z,12Z-octadecadienoyl)-sn-glycero-3-phosphate + H2O = 1-octadecanoyl-2-(9Z,12Z)-octadecadienoyl-sn-glycerol + phosphate. The catalysed reaction is 1-octadecanoyl-2-(9Z-octadecenoyl)-sn-glycero-3-phosphate + H2O = 1-octadecanoyl-2-(9Z-octadecenoyl)-sn-glycerol + phosphate. It carries out the reaction 1-hexadecanoyl-2-(4Z,7Z,10Z,13Z,16Z,19Z-docosahexaenoyl)-sn-glycero-3-phosphate + H2O = 1-hexadecanoyl-2-(4Z,7Z,10Z,13Z,16Z,19Z-docosahexaenoyl)-sn-glycerol + phosphate. The enzyme catalyses 1,2-dioctadecanoyl-sn-glycero-3-phosphate + H2O = 1,2-dioctadecanoyl-sn-glycerol + phosphate. It catalyses the reaction 1-hexadecanoyl-2-(5Z,8Z,11Z,14Z-eicosatetraenoyl)-sn-glycero-3-phosphate + H2O = 1-hexadecanoyl-2-(5Z,8Z,11Z,14Z-eicosatetraenoyl)-sn-glycerol + phosphate. The catalysed reaction is 1-hexadecanoyl-2-(9Z,12Z-octadecadienoyl)-sn-glycero-3-phosphate + H2O = 1-hexadecanoyl-2-(9Z,12Z-octadecadienoyl)-sn-glycerol + phosphate. It carries out the reaction 1-hexadecanoyl-2-(9Z-octadecenoyl)-sn-glycero-3-phosphate + H2O = 1-hexadecanoyl-2-(9Z-octadecenoyl)-sn-glycerol + phosphate. The enzyme catalyses 1,2-di-(4Z,7Z,10Z,13Z,16Z,19Z-docosahexaenoyl)-sn-glycero-3-phosphate + H2O = 1,2-di-(4Z,7Z,10Z,13Z,16Z,19Z-docosahexaenoyl)-sn-glycerol + phosphate. It catalyses the reaction 1,2-di-(5Z,8Z,11Z,14Z)-eicosatetraenoyl-sn-glycero-3-phosphate + H2O = 1,2-di-(5Z,8Z,11Z,14Z)-eicosatetraenoyl-sn-glycerol + phosphate. The catalysed reaction is 1,2-di-(9Z,12Z-octadecadienoyl)-sn-glycero-3-phosphate + H2O = 1,2-di-(9Z,12Z-octadecadienoyl)-sn-glycerol + phosphate. It carries out the reaction 1,2-di-(9Z-octadecenoyl)-sn-glycero-3-phosphate + H2O = 1,2-di-(9Z-octadecenoyl)-sn-glycerol + phosphate. The enzyme catalyses 1,2-dihexadecanoyl-sn-glycero-3-phosphate + H2O = 1,2-dihexadecanoyl-sn-glycerol + phosphate. With respect to regulation, inhibited by N-ethylmaleimide treatment. Acts as a magnesium-dependent phosphatidate phosphatase enzyme which catalyzes the conversion of phosphatidic acid to diacylglycerol during triglyceride, phosphatidylcholine and phosphatidylethanolamine biosynthesis and therefore controls the metabolism of fatty acids at different levels. Is involved in adipocyte differentiation. Also acts as nuclear transcriptional coactivator for PPARGC1A/PPARA regulatory pathway to modulate lipid metabolism gene expression. Its function is as follows. Recruited at the mitochondrion outer membrane and is involved in mitochondrial fission by converting phosphatidic acid to diacylglycerol. This chain is Phosphatidate phosphatase LPIN1 (Lpin1), found in Mus musculus (Mouse).